We begin with the raw amino-acid sequence, 352 residues long: Glycerol-1-phosphate dehydrogenase [NAD(P)+] (352 aa).

NAD(+) contacts are provided by residues 99 to 103 and 121 to 124; these read GAKID and TAPS. Asp126 contacts substrate. Ser130 contributes to the NAD(+) binding site. Asp173 serves as a coordination point for substrate. Asp173 and His253 together coordinate Zn(2+). His257 lines the substrate pocket. Position 269 (His269) interacts with Zn(2+).

The protein belongs to the glycerol-1-phosphate dehydrogenase family. Requires Zn(2+) as cofactor.

The protein localises to the cytoplasm. It carries out the reaction sn-glycerol 1-phosphate + NAD(+) = dihydroxyacetone phosphate + NADH + H(+). The enzyme catalyses sn-glycerol 1-phosphate + NADP(+) = dihydroxyacetone phosphate + NADPH + H(+). It functions in the pathway membrane lipid metabolism; glycerophospholipid metabolism. Catalyzes the NAD(P)H-dependent reduction of dihydroxyacetonephosphate (DHAP or glycerone phosphate) to glycerol 1-phosphate (G1P). The G1P thus generated is used as the glycerophosphate backbone of phospholipids in the cellular membranes of Archaea. The protein is Glycerol-1-phosphate dehydrogenase [NAD(P)+] of Thermoplasma acidophilum (strain ATCC 25905 / DSM 1728 / JCM 9062 / NBRC 15155 / AMRC-C165).